We begin with the raw amino-acid sequence, 390 residues long: GTPase Obg (390 aa).

One can recognise an Obg domain in the interval 1 to 159 (MKFVDEASIL…RDLMLELMLL (159 aa)). The segment at 127-147 (NTRFKSSVNRTPRQKTMGTPG) is disordered. Polar residues predominate over residues 129 to 143 (RFKSSVNRTPRQKTM). In terms of domain architecture, OBG-type G spans 160-333 (ADVGMLGMPN…LCWDVMTFII (174 aa)). Residues 166-173 (GMPNAGKS), 191-195 (FTTLV), 213-216 (DIPG), 283-286 (NKID), and 314-316 (SAA) contribute to the GTP site. Mg(2+) is bound by residues S173 and T193.

It belongs to the TRAFAC class OBG-HflX-like GTPase superfamily. OBG GTPase family. In terms of assembly, monomer. It depends on Mg(2+) as a cofactor.

The protein resides in the cytoplasm. Functionally, an essential GTPase which binds GTP, GDP and possibly (p)ppGpp with moderate affinity, with high nucleotide exchange rates and a fairly low GTP hydrolysis rate. Plays a role in control of the cell cycle, stress response, ribosome biogenesis and in those bacteria that undergo differentiation, in morphogenesis control. This is GTPase Obg from Citrobacter koseri (strain ATCC BAA-895 / CDC 4225-83 / SGSC4696).